The chain runs to 477 residues: Metallopeptidase AprA (477 aa).

The signal sequence occupies residues 1–20; sequence MSKAKDKAIVSAAQASTAYS. His-183 provides a ligand contact to Zn(2+). Glu-184 is an active-site residue. Zn(2+)-binding residues include His-187 and His-193. Arg-264, Gly-266, Thr-268, Asp-296, Gly-298, Gly-299, Asp-301, Thr-338, Glu-340, Gly-345, Gly-347, Asp-349, Asn-354, Ala-356, Asn-358, Gly-362, Gly-363, Ala-364, Gly-365, Asp-367, Gly-371, Ala-372, Gly-373, Gly-374, Asp-376, Gly-380, Gly-381, Ala-382, Gly-383, Asp-385, Asp-394, Asp-401, Asp-411, Asp-453, Ser-455, and Asp-461 together coordinate Ca(2+). 3 Hemolysin-type calcium-binding repeats span residues 343–360, 361–378, and 379–391; these read FGGAGNDLIIGNNAANVI, KGGAGNDLIYGAGGADQL, and WGGAGNDTFVFGA.

It belongs to the peptidase M10B family. Ca(2+) is required as a cofactor. Zn(2+) serves as cofactor.

It is found in the secreted. Is completely inhibited by the metal cation chelators 1,10-phenanthroline and EDTA, but PMSF, pepstatin A and E-64 have no effect on activity. Peptidase able to cleave azocasein and the milk substrates beta-casein and Na-caseinate. Can withstand UHT processing of milk, and is able to spoil UHT milk over the storage period. The chain is Metallopeptidase AprA from Pseudomonas marginalis (Pseudomonas panacis).